A 1503-amino-acid polypeptide reads, in one-letter code: Chromosome partition protein MukB (1503 aa).

Positions 1–19 (MMNTNELFDQTAVNSSQDK) are enriched in polar residues. Residues 1–21 (MMNTNELFDQTAVNSSQDKPL) form a disordered region. 65–72 (GGNGAGKS) contacts ATP. Coiled-coil stretches lie at residues 370-495 (MNAL…QRLS), 536-616 (DQKM…HRQQ), 662-697 (MQEM…SQAD), 865-1173 (EMLM…SAEE), and 1238-1293 (DAIE…LQNI). A flexible hinge region spans residues 696–813 (ADGAEDIRLN…EVPLFGRAAR (118 aa)).

The protein belongs to the SMC family. MukB subfamily. Homodimerization via its hinge domain. Binds to DNA via its C-terminal region. Interacts, and probably forms a ternary complex, with MukE and MukF via its C-terminal region. The complex formation is stimulated by calcium or magnesium. Interacts with tubulin-related protein FtsZ.

The protein resides in the cytoplasm. It is found in the nucleoid. In terms of biological role, plays a central role in chromosome condensation, segregation and cell cycle progression. Functions as a homodimer, which is essential for chromosome partition. Involved in negative DNA supercoiling in vivo, and by this means organize and compact chromosomes. May achieve or facilitate chromosome segregation by condensation DNA from both sides of a centrally located replisome during cell division. The chain is Chromosome partition protein MukB from Haemophilus ducreyi (strain 35000HP / ATCC 700724).